We begin with the raw amino-acid sequence, 39 residues long: Photosystem II reaction center protein J (39 aa).

The chain crosses the membrane as a helical span at residues 7-27 (IPLWIVAVVAGLGVITVVGLF).

It belongs to the PsbJ family. In terms of assembly, PSII is composed of 1 copy each of membrane proteins PsbA, PsbB, PsbC, PsbD, PsbE, PsbF, PsbH, PsbI, PsbJ, PsbK, PsbL, PsbM, PsbT, PsbX, PsbY, PsbZ, Psb30/Ycf12, peripheral proteins PsbO, CyanoQ (PsbQ), PsbU, PsbV and a large number of cofactors. It forms dimeric complexes.

It localises to the cellular thylakoid membrane. One of the components of the core complex of photosystem II (PSII). PSII is a light-driven water:plastoquinone oxidoreductase that uses light energy to abstract electrons from H(2)O, generating O(2) and a proton gradient subsequently used for ATP formation. It consists of a core antenna complex that captures photons, and an electron transfer chain that converts photonic excitation into a charge separation. This is Photosystem II reaction center protein J from Synechococcus sp. (strain JA-2-3B'a(2-13)) (Cyanobacteria bacterium Yellowstone B-Prime).